A 282-amino-acid polypeptide reads, in one-letter code: ATP phosphoribosyltransferase (282 aa).

The protein belongs to the ATP phosphoribosyltransferase family. Long subfamily. It depends on Mg(2+) as a cofactor.

The protein localises to the cytoplasm. It carries out the reaction 1-(5-phospho-beta-D-ribosyl)-ATP + diphosphate = 5-phospho-alpha-D-ribose 1-diphosphate + ATP. It participates in amino-acid biosynthesis; L-histidine biosynthesis; L-histidine from 5-phospho-alpha-D-ribose 1-diphosphate: step 1/9. Feedback inhibited by histidine. Functionally, catalyzes the condensation of ATP and 5-phosphoribose 1-diphosphate to form N'-(5'-phosphoribosyl)-ATP (PR-ATP). Has a crucial role in the pathway because the rate of histidine biosynthesis seems to be controlled primarily by regulation of HisG enzymatic activity. This Pyrobaculum calidifontis (strain DSM 21063 / JCM 11548 / VA1) protein is ATP phosphoribosyltransferase.